The chain runs to 148 residues: Large ribosomal subunit protein uL11 (148 aa).

The tract at residues 89-108 is disordered; that stretch reads EKKKGSGAHKPGKEKVGQVT.

Belongs to the universal ribosomal protein uL11 family. In terms of assembly, part of the ribosomal stalk of the 50S ribosomal subunit. Interacts with L10 and the large rRNA to form the base of the stalk. L10 forms an elongated spine to which L12 dimers bind in a sequential fashion forming a multimeric L10(L12)X complex. In terms of processing, one or more lysine residues are methylated.

Forms part of the ribosomal stalk which helps the ribosome interact with GTP-bound translation factors. The sequence is that of Large ribosomal subunit protein uL11 from Anaeromyxobacter sp. (strain Fw109-5).